Consider the following 700-residue polypeptide: Glycine--tRNA ligase beta subunit (700 aa).

This sequence belongs to the class-II aminoacyl-tRNA synthetase family. As to quaternary structure, tetramer of two alpha and two beta subunits.

Its subcellular location is the cytoplasm. It catalyses the reaction tRNA(Gly) + glycine + ATP = glycyl-tRNA(Gly) + AMP + diphosphate. This chain is Glycine--tRNA ligase beta subunit, found in Janthinobacterium sp. (strain Marseille) (Minibacterium massiliensis).